A 374-amino-acid polypeptide reads, in one-letter code: Queuine tRNA-ribosyltransferase (374 aa).

D89 serves as the catalytic Proton acceptor. Substrate-binding positions include 89–93 (DSGGF), D143, Q187, and G214. Positions 245 to 251 (GVGKPED) are RNA binding. D264 serves as the catalytic Nucleophile. The segment at 269-273 (TRNAR) is RNA binding; important for wobble base 34 recognition. Zn(2+) contacts are provided by C302, C304, C307, and H333.

This sequence belongs to the queuine tRNA-ribosyltransferase family. Homodimer. Within each dimer, one monomer is responsible for RNA recognition and catalysis, while the other monomer binds to the replacement base PreQ1. The cofactor is Zn(2+).

It carries out the reaction 7-aminomethyl-7-carbaguanine + guanosine(34) in tRNA = 7-aminomethyl-7-carbaguanosine(34) in tRNA + guanine. The protein operates within tRNA modification; tRNA-queuosine biosynthesis. Its function is as follows. Catalyzes the base-exchange of a guanine (G) residue with the queuine precursor 7-aminomethyl-7-deazaguanine (PreQ1) at position 34 (anticodon wobble position) in tRNAs with GU(N) anticodons (tRNA-Asp, -Asn, -His and -Tyr). Catalysis occurs through a double-displacement mechanism. The nucleophile active site attacks the C1' of nucleotide 34 to detach the guanine base from the RNA, forming a covalent enzyme-RNA intermediate. The proton acceptor active site deprotonates the incoming PreQ1, allowing a nucleophilic attack on the C1' of the ribose to form the product. After dissociation, two additional enzymatic reactions on the tRNA convert PreQ1 to queuine (Q), resulting in the hypermodified nucleoside queuosine (7-(((4,5-cis-dihydroxy-2-cyclopenten-1-yl)amino)methyl)-7-deazaguanosine). The polypeptide is Queuine tRNA-ribosyltransferase (Serratia proteamaculans (strain 568)).